Reading from the N-terminus, the 110-residue chain is Ribonuclease P protein component 4 (110 aa).

Zn(2+) contacts are provided by C65, C68, C94, and C97.

It belongs to the eukaryotic/archaeal RNase P protein component 4 family. Consists of a catalytic RNA component and at least 4-5 protein subunits. Zn(2+) is required as a cofactor.

It localises to the cytoplasm. The enzyme catalyses Endonucleolytic cleavage of RNA, removing 5'-extranucleotides from tRNA precursor.. Part of ribonuclease P, a protein complex that generates mature tRNA molecules by cleaving their 5'-ends. This chain is Ribonuclease P protein component 4, found in Methanococcus maripaludis (strain C6 / ATCC BAA-1332).